A 73-amino-acid polypeptide reads, in one-letter code: Mauriporin (73 aa).

The N-terminal stretch at 1-22 is a signal peptide; the sequence is MNKKTLLVIFFITMLIVDEVNS.

The protein belongs to the non-disulfide-bridged peptide (NDBP) superfamily. Long chain multifunctional peptide (group 2) family. As to expression, expressed by the venom gland.

It is found in the secreted. It localises to the target cell membrane. Amphipathic peptide that displays potent antimicrobial activities against a range of Gram-positive and Gram-negative planktonic bacteria with MIC values in the range 5 uM to 10 uM. In more details, it is active on Listeria ivanovii (MIC=5 uM), Staphylococcus epidermidis (MIC=10 uM), Salmonella enterica (MIC=5 uM), Pseudomonas aeruginosa (ATCC 27853) (MIC=5 uM), Acinetobacter baumannii (MIC=5 uM), Klebsiella pneumoniae (MIC=5 uM), Escherichia coli (MIC=7.5 uM), Salmonella typhimurium (MIC=7.5 uM), Pseudomonas aeruginosa (ATCC 9027) (MIC=10 uM). Is also able to prevent P.aeruginosa biofilm formation while showing weak hemolytic activity towards human erythrocytes. Probably induces bacterial cell death through membrane permeabilization. Moreover, shows DNA-binding activities. Also exerts potent selective cytotoxic and antiproliferative activity against three different prostate cancer cell lines (IC(50)=4.4-7.8 uM), compared to non-tumorigenic cell lines (IC(50)=59.7 uM in Vero and 62.5 uM in HUVEC cells). This peptide possibly exerts its cytotoxic activity through a necrotic mode of cell death. Only shows diminished hemolytic activity against sheep erythrocytes. Does not induce cell death through apoptosis and consequently is not acting upon an intracellular target. The sequence is that of Mauriporin from Androctonus mauritanicus (Fat-tailed scorpion).